The chain runs to 281 residues: Survival motor neuron protein 1 (281 aa).

2 disordered regions span residues 1–20 and 42–77; these read MANG…SDDS and ALKG…NAAP. Position 14 is a phosphothreonine (threonine 14). Residues serine 17 and serine 20 each carry the phosphoserine modification. Over residues 59–73 the composition is skewed to basic residues; that stretch reads KKRKNNKKNKSRKRC. Residues 80–140 enclose the Tudor domain; that stretch reads EWQVGDSCYA…LTEPPDMDED (61 aa). The segment covering 145-159 has biased composition (basic and acidic residues); sequence ANVKETESSTEESDR. A disordered region spans residues 145-242; it reads ANVKETESST…PMSPDFGEDD (98 aa). Pro residues-rich tracts occupy residues 179–197 and 212–235; these read MGPP…PPPP and PSFP…PPMS. Residues 225-252 form a P2 (binding site for SNRPB) region; the sequence is PPMIPPPPPMSPDFGEDDEALGSMLISW. The required for interaction with SYNCRIP stretch occupies residues 264–279; sequence GLRQGRKEAAASKKSH.

Belongs to the SMN family. Homodimer. Component of an import snRNP complex composed of kpnb1, rnut1, smn1 and znf259. Part of the core SMN complex that contains smn1, gemin2/sip1, ddx20/gemin3, gemin4, gemin5, gemin6, gemin7, gemin8 and strap/unrip. Interacts with ddx20, fbl, nola1, rnut1, syncrip and with several spliceosomal snRNP core Sm proteins, including snrpb, snrpd1, snrpd2, snrpd3, snrpe and ilf3. Interacts with elavl4.

It is found in the nucleus. It localises to the gem. Its subcellular location is the cajal body. The protein resides in the cytoplasm. The protein localises to the cytoplasmic granule. It is found in the perikaryon. It localises to the cell projection. Its subcellular location is the neuron projection. The protein resides in the myofibril. The protein localises to the sarcomere. It is found in the z line. The SMN complex plays an essential role in spliceosomal snRNP assembly in the cytoplasm and is required for pre-mRNA splicing in the nucleus. It may also play a role in the metabolism of snoRNPs. Required in motor neurons and proprioceptive neurons to ensure correct U12 intron splicing and proper levels of tmem41b mRNA. Required for the maturation of motor neuron axonal branches and dendrites. This is Survival motor neuron protein 1 (smn1) from Danio rerio (Zebrafish).